A 256-amino-acid chain; its full sequence is Non-homologous end joining protein Ku 2 (256 aa).

Residues phenylalanine 13–serine 184 form the Ku domain.

Belongs to the prokaryotic Ku family. In terms of assembly, homodimer. Interacts with LigD.

In terms of biological role, with LigD forms a non-homologous end joining (NHEJ) DNA repair enzyme, which repairs dsDNA breaks with reduced fidelity. Binds linear dsDNA with 5'- and 3'- overhangs but not closed circular dsDNA nor ssDNA. Recruits and stimulates the ligase activity of LigD. The protein is Non-homologous end joining protein Ku 2 of Geotalea uraniireducens (strain Rf4) (Geobacter uraniireducens).